The sequence spans 301 residues: MKVIFMGSSEFSVPTLEFLIGSQHEVLAVYTKAPKPAGRGHLLTKTPVHAYADAHNVPVRSPASLSSDSERDIIEKYMPDAIIVASYGMILPRWMLEVPRFGCINVHPSLLPRWRGAAPMQHAILSGDAVTGVTIMQLNERLDAGDIFLQESTPIGSRENIVALSERLSSMGGRMLLKVLDNLDTMRSVSQDDAGATYAAKPSEFCVNFNDAADYICRQVRAFYPRMFFFLDGKRVKLLEADNYELAGAQIGDVVNDELHIQCGNGTVLAPKIVQPESKKPCDIRSFLRGFRGCVSNVLQR.

109–112 (SLLP) provides a ligand contact to (6S)-5,6,7,8-tetrahydrofolate.

This sequence belongs to the Fmt family.

It catalyses the reaction L-methionyl-tRNA(fMet) + (6R)-10-formyltetrahydrofolate = N-formyl-L-methionyl-tRNA(fMet) + (6S)-5,6,7,8-tetrahydrofolate + H(+). In terms of biological role, attaches a formyl group to the free amino group of methionyl-tRNA(fMet). The formyl group appears to play a dual role in the initiator identity of N-formylmethionyl-tRNA by promoting its recognition by IF2 and preventing the misappropriation of this tRNA by the elongation apparatus. This Anaplasma marginale (strain St. Maries) protein is Methionyl-tRNA formyltransferase.